Reading from the N-terminus, the 204-residue chain is Large ribosomal subunit protein eL15 (204 aa).

The protein belongs to the eukaryotic ribosomal protein eL15 family. Component of the large ribosomal subunit.

It is found in the cytoplasm. Functionally, component of the large ribosomal subunit. The ribosome is a large ribonucleoprotein complex responsible for the synthesis of proteins in the cell. This chain is Large ribosomal subunit protein eL15 (rpl15), found in Carassius auratus (Goldfish).